Consider the following 182-residue polypeptide: uncharacterized protein (182 aa).

A run of 2 helical transmembrane segments spans residues 58 to 78 (ILFG…YVVY) and 81 to 101 (PVSI…IIIW).

This sequence to M.jannaschii MJ0803.

Its subcellular location is the cell membrane. This is an uncharacterized protein from Methanocaldococcus jannaschii (strain ATCC 43067 / DSM 2661 / JAL-1 / JCM 10045 / NBRC 100440) (Methanococcus jannaschii).